The primary structure comprises 210 residues: Glutathione S-transferase P (210 aa).

The GST N-terminal domain maps to 2 to 81 (PPYTVVYFPV…HLGRTLGLYG (80 aa)). A Phosphotyrosine; by EGFR modification is found at Tyr4. Glutathione contacts are provided by residues Tyr8, Arg14, Trp39, Lys45, and 52-53 (QL). Thr62 bears the Phosphothreonine mark. Residue 65–66 (QS) participates in glutathione binding. The region spanning 83-204 (DQQEAALVDM…ASPEYVNLPI (122 aa)) is the GST C-terminal domain. Residues Lys103 and Lys116 each carry the N6-succinyllysine modification. At Lys128 the chain carries N6-acetyllysine. Tyr199 carries the phosphotyrosine; by EGFR modification.

The protein belongs to the GST superfamily. Pi family. As to quaternary structure, homodimer. Interacts with CDK5.

It localises to the cytoplasm. It is found in the mitochondrion. The protein localises to the nucleus. The catalysed reaction is RX + glutathione = an S-substituted glutathione + a halide anion + H(+). The enzyme catalyses prostaglandin J2 + glutathione = prostaglandin J2-S-(R)-glutathione. It carries out the reaction prostaglandin J2 + glutathione = prostaglandin J2-S-(S)-glutathione. It catalyses the reaction prostaglandin A2 + glutathione = prostaglandin A2-S-(S)-glutathione. The catalysed reaction is 11(S)-hydroxy-14(S),15(S)-epoxy-(5Z,8Z,12E)-eicosatrienoate + glutathione = (11S,15S)-dihydroxy-14(R)-S-glutathionyl-(5Z,8Z,12E)-eicosatrienoate. Conjugation of reduced glutathione to a wide number of exogenous and endogenous hydrophobic electrophiles. Involved in the formation of glutathione conjugates of both prostaglandin A2 (PGA2) and prostaglandin J2 (PGJ2). Participates in the formation of novel hepoxilin regioisomers. Negatively regulates CDK5 activity via p25/p35 translocation to prevent neurodegeneration. This chain is Glutathione S-transferase P, found in Homo sapiens (Human).